Consider the following 248-residue polypeptide: Triosephosphate isomerase (248 aa).

Positions 12 and 14 each coordinate substrate. At K14 the chain carries N6-acetyllysine. A 3'-nitrotyrosine modification is found at Y68. The Electrophile role is filled by H96. At S106 the chain carries Phosphoserine. A Glycyl lysine isopeptide (Lys-Gly) (interchain with G-Cter in SUMO1) cross-link involves residue K142. An N6-succinyllysine modification is found at K149. Position 156 is an N6-acetyllysine; alternate (K156). K156 bears the N6-succinyllysine; alternate mark. E166 acts as the Proton acceptor in catalysis. A Phosphothreonine modification is found at T173. N6-acetyllysine; alternate is present on K194. N6-succinyllysine; alternate is present on K194. Residue K194 is modified to N6-methyllysine; alternate. Y209 carries the 3'-nitrotyrosine modification. At S212 the chain carries Phosphoserine. Position 214 is a phosphothreonine (T214). S223 is modified (phosphoserine). K238 bears the N6-acetyllysine mark.

Belongs to the triosephosphate isomerase family. As to quaternary structure, homodimer.

The protein resides in the cytoplasm. The enzyme catalyses dihydroxyacetone phosphate = methylglyoxal + phosphate. It carries out the reaction D-glyceraldehyde 3-phosphate = dihydroxyacetone phosphate. It functions in the pathway carbohydrate degradation; glycolysis; D-glyceraldehyde 3-phosphate from glycerone phosphate: step 1/1. The protein operates within carbohydrate biosynthesis; gluconeogenesis. Its function is as follows. Triosephosphate isomerase is an extremely efficient metabolic enzyme that catalyzes the interconversion between dihydroxyacetone phosphate (DHAP) and D-glyceraldehyde-3-phosphate (G3P) in glycolysis and gluconeogenesis. Functionally, it is also responsible for the non-negligible production of methylglyoxal a reactive cytotoxic side-product that modifies and can alter proteins, DNA and lipids. The chain is Triosephosphate isomerase (TPI1) from Sus scrofa (Pig).